Reading from the N-terminus, the 289-residue chain is HTH-type transcriptional activator AmpR (289 aa).

The region spanning 6–63 (LPLNALRVFEVAMRQGSFTKAAIELRVTQAAVSHQVARLEDLLGTALFLRTSQGLIPT) is the HTH lysR-type domain. A DNA-binding region (H-T-H motif) is located at residues 23-42 (FTKAAIELRVTQAAVSHQVA).

It belongs to the LysR transcriptional regulatory family.

It is found in the cytoplasm. Its function is as follows. This protein is a positive regulator of gene expression of cephalosporinase (AmpC). The protein is HTH-type transcriptional activator AmpR (ampR) of Rhodobacter capsulatus (Rhodopseudomonas capsulata).